The primary structure comprises 64 residues: MAQEQTQRAGGGEDDETTGGDGSAGQERREKLAAETDDLLDEIDDVLEENAEDFVRAYVQKGGQ.

The disordered stretch occupies residues 1–37 (MAQEQTQRAGGGEDDETTGGDGSAGQERREKLAAETD). An ARC ATPase binding region spans residues 21–58 (DGSAGQERREKLAAETDDLLDEIDDVLEENAEDFVRAY). Residues 24 to 52 (AGQERREKLAAETDDLLDEIDDVLEENAE) adopt a coiled-coil conformation. Gln-64 carries the deamidated glutamine modification. Gln-64 participates in a covalent cross-link: Isoglutamyl lysine isopeptide (Gln-Lys) (interchain with K-? in acceptor proteins).

It belongs to the prokaryotic ubiquitin-like protein family. Strongly interacts with the proteasome-associated ATPase ARC through a hydrophobic interface; the interacting region of Pup lies in its C-terminal half. There is one Pup binding site per ARC hexamer ring. Post-translationally, is modified by deamidation of its C-terminal glutamine to glutamate by the deamidase Dop, a prerequisite to the subsequent pupylation process.

It functions in the pathway protein degradation; proteasomal Pup-dependent pathway. Functionally, protein modifier that is covalently attached to lysine residues of substrate proteins, thereby targeting them for proteasomal degradation. The tagging system is termed pupylation. The sequence is that of Prokaryotic ubiquitin-like protein Pup from Rhodococcus erythropolis (strain PR4 / NBRC 100887).